The primary structure comprises 953 residues: MADYKSTLNLPYTQFPMRGNLPIIEIKILERWNRDNLYEIIRRKKNEKKLFLLHDGPPYANGFIHLGHAVNKILKDIIIKFKGLSGYDAPYIPGWDCHGLPIELQVEKLIKKVNMDIDINSQEFRNYCREYVKKQIEIQKKDFIRLGILGEWKNPYLTMDYKTEANIIRTLGKIISNGYFYKGIKPVYWCFQCHSALANSEVEYNDYHYSNAVDVGFSIVENVSINKIFNINCYIENIELVIWTTTIWTLPANQAISIHPDYIYQLVKILDNEKYLIIAANLVNMFMNRIKCTMWQVLGEVLGSKLDRLTARHPFMNFNVPLVLSKHIKLDSGTGLVHIAPDHGPDDYLISKKYKFKNRDSLIDSNGYYLSNSHNRLCGLHIFNANEIIIDLLYKSKNFLYFNANYQHSYPYCWRHKIPLIFRTTSQWFVNMDHNNLRDKLLRTLQQVRWIPDSGYSSMQSMIVNRPDWCLSRQRVWGIPIPVFVHKKTEVLHPNTCIFIEQVAQLVEKYGIQIWWDLKNEDIILNKAESMNYQKIYDTLDVWFDSGSTHDSVILDRFNSKLKSKLQIDLYLEGVDQYRGWFMSSLIIAVAIKGYAPYKQVLSHGFTIDDKGNKMSKSLGNIIRPLDIVNKFGSDILRLWVASSDYSKDMVISDDVLKNVTDIYRRIRNTIRFFLANINDFDPEKDLVQSNRMVALDQWAINHTLSVQVKIISNYEQYKFHNVIRYIMKFCSIEMGSFYLDVVKDRLYTLNKDSLARRSCQTALYHIIESMVRWIAPILSFTADEIWKYIPGNRSKYVFTEEWYDRLFKIDENQIVNSNYWNFFLNIRNKVNKVIEQERVNGIIKGSLEADVILYVTPILKKKLRILKNELAFGLIVSSVMVLSIDDVDFNTIKENHEENSDELKVVLKKSHGIKCLRCWNYTLSMSKNENYLNICSRCVHNITGLGEDRRFF.

The 'HIGH' region motif lies at 58–68 (PYANGFIHLGH). Residue Glu-573 participates in L-isoleucyl-5'-AMP binding. The 'KMSKS' region signature appears at 614-618 (KMSKS). Lys-617 provides a ligand contact to ATP. Zn(2+)-binding residues include Cys-916, Cys-919, Cys-936, and Cys-939.

This sequence belongs to the class-I aminoacyl-tRNA synthetase family. IleS type 1 subfamily. As to quaternary structure, monomer. Zn(2+) is required as a cofactor.

Its subcellular location is the cytoplasm. It catalyses the reaction tRNA(Ile) + L-isoleucine + ATP = L-isoleucyl-tRNA(Ile) + AMP + diphosphate. Its function is as follows. Catalyzes the attachment of isoleucine to tRNA(Ile). As IleRS can inadvertently accommodate and process structurally similar amino acids such as valine, to avoid such errors it has two additional distinct tRNA(Ile)-dependent editing activities. One activity is designated as 'pretransfer' editing and involves the hydrolysis of activated Val-AMP. The other activity is designated 'posttransfer' editing and involves deacylation of mischarged Val-tRNA(Ile). This chain is Isoleucine--tRNA ligase, found in Blochmanniella floridana.